Reading from the N-terminus, the 673-residue chain is MTNYLLEIGLEEIPAHLVTPSINQLAERMEAFLNENRLKFDKIIKFSTPRRLALIVEGLSESSEAIDEEVKGPSAKIAKDAEGNWSKAIQGFSRGQGATPDDLILKGDYYYAKKHVDGVKAEEILSKVGDEVIAKMTFSTYMKWGNNDFLFVRPIQWIVSLLEDEIVAFDLLDVTANRFSRGHRFLANVEIELKNANDYASKMPENFVLVDAEHRKAEISAQILALASENNWQVTLHKDLLEEVNNIVEYPTAFVGSFDPKYLSVPAEVLVTSMRDNQRYFEVYNQEGQLAPNFISVRNGNAEHIENVVLGNEKVLVARLEDAEFFWKEDQKLKIEDLVAKLGKVTFHAKIGSITEHMARTKLIAAKLADIAGLTDEEKVDVARSAEIYKFDLLTGMVGEFDELQGVMGEKYALLAGENANVAAAIREHYMPTSADGQLPETKVGSVLAAADKIDSVLSFFNVGLIPSGSNDPYALRRAVQGLIRIIEKMNWHFDLSLFIDQFEGQNHAEILEFVKARVQKLLLEKLDRYDIVEAAINSSNFDITNMMESAFVIDGHKLHEPFKPAIENVSRSINLVKKAADIAEINPALFEEDTEQALYDAVISLQNQWTYKPCEEKFRAIVHTLAPAIEAFFDNVMVMAEDLAVRDNRIALLSEVVALTSVMADFSLINTK.

Belongs to the class-II aminoacyl-tRNA synthetase family. As to quaternary structure, tetramer of two alpha and two beta subunits.

Its subcellular location is the cytoplasm. It catalyses the reaction tRNA(Gly) + glycine + ATP = glycyl-tRNA(Gly) + AMP + diphosphate. The sequence is that of Glycine--tRNA ligase beta subunit from Lactococcus lactis subsp. cremoris (strain SK11).